A 253-amino-acid polypeptide reads, in one-letter code: 3-isopropylmalate dehydratase small subunit 3 (253 aa).

The N-terminal 56 residues, 1–56 (MATSQQFLNPTLFKSLASSNKNSCTLCPSPFLQLKSASTIFNYKPLTSSSATIITR), are a transit peptide targeting the chloroplast.

It belongs to the LeuD family. In terms of assembly, heterodimer of the large LEUC/IIL1 subunit and the small LEUD (SSU1, SSU2 or SSU3) subunits. In terms of tissue distribution, expressed in vascular bundles of roots, cotyledons and rosette leaves. Expressed in stem vascular bundles which branche off into lateral inflorescences. Expressed in connective tissues in anthers. In hypocotyls, expressed in parenchyma cells surrounding the vasculature. In rosette leaves, expressed in phloem cells and cells close to the xylem along the vascular bundles. In roots of adult plants, expressed in cells closely associated with the stele. In flowering stalks, expressed in parenchyma cells associated with the phloem or the xylem.

The protein resides in the plastid. The protein localises to the chloroplast stroma. The enzyme catalyses (2R,3S)-3-isopropylmalate = (2S)-2-isopropylmalate. It carries out the reaction a 2-(omega-methylsulfanyl)alkylmalate = a 2-(omega-methylsulfanyl)alkylmaleate + H2O. The catalysed reaction is 2-(3-methylsulfanyl)propylmalate = 2-(2-methylsulfanyl)propylmaleate + H2O. It catalyses the reaction a 3-(omega-methylsulfanyl)alkylmalate = a 2-(omega-methylsulfanyl)alkylmaleate + H2O. The enzyme catalyses 2-(2-methylsulfanyl)ethylmalate = 2-(2-methylsulfanyl)ethylmaleate + H2O. It carries out the reaction 3-(2-methylsulfanyl)ethylmalate = 2-(2-methylsulfanyl)ethylmaleate + H2O. The catalysed reaction is 3-(3-methylsulfanyl)propylmalate = 2-(2-methylsulfanyl)propylmaleate + H2O. The protein operates within amino-acid biosynthesis; L-leucine biosynthesis; L-leucine from 3-methyl-2-oxobutanoate: step 2/4. Catalyzes the isomerization between 2-isopropylmalate and 3-isopropylmalate, via the formation of 2-isopropylmaleate. Functions redundantly with LEUD1 in the methionine chain elongation pathway of aliphatic glucosinolate formation. The chain is 3-isopropylmalate dehydratase small subunit 3 from Arabidopsis thaliana (Mouse-ear cress).